A 253-amino-acid polypeptide reads, in one-letter code: Malonyl-[acyl-carrier protein] O-methyltransferase (253 aa).

The protein belongs to the methyltransferase superfamily.

The catalysed reaction is malonyl-[ACP] + S-adenosyl-L-methionine = malonyl-[ACP] methyl ester + S-adenosyl-L-homocysteine. It participates in cofactor biosynthesis; biotin biosynthesis. Functionally, converts the free carboxyl group of a malonyl-thioester to its methyl ester by transfer of a methyl group from S-adenosyl-L-methionine (SAM). It allows to synthesize pimeloyl-ACP via the fatty acid synthetic pathway. The sequence is that of Malonyl-[acyl-carrier protein] O-methyltransferase from Pectobacterium atrosepticum (strain SCRI 1043 / ATCC BAA-672) (Erwinia carotovora subsp. atroseptica).